A 398-amino-acid chain; its full sequence is L-rhamnonate dehydratase (398 aa).

Residues H22 and R48 each coordinate substrate. D214, E241, and E269 together coordinate Mg(2+). H319 (proton acceptor) is an active-site residue. E339 is a substrate binding site.

The protein belongs to the mandelate racemase/muconate lactonizing enzyme family. RhamD subfamily. Homooctamer; tetramer of dimers. The cofactor is Mg(2+).

It carries out the reaction L-rhamnonate = 2-dehydro-3-deoxy-L-rhamnonate + H2O. Its function is as follows. Catalyzes the dehydration of L-rhamnonate to 2-keto-3-deoxy-L-rhamnonate (KDR). The sequence is that of L-rhamnonate dehydratase from Verminephrobacter eiseniae (strain EF01-2).